The sequence spans 188 residues: dCTP deaminase (188 aa).

DCTP-binding positions include 111 to 116, 135 to 137, Gln156, Tyr170, and Gln180; these read KSTYAR and TLE. Glu137 acts as the Proton donor/acceptor in catalysis.

This sequence belongs to the dCTP deaminase family. Homotrimer.

The catalysed reaction is dCTP + H2O + H(+) = dUTP + NH4(+). The protein operates within pyrimidine metabolism; dUMP biosynthesis; dUMP from dCTP (dUTP route): step 1/2. Functionally, catalyzes the deamination of dCTP to dUTP. The chain is dCTP deaminase from Marinobacter nauticus (strain ATCC 700491 / DSM 11845 / VT8) (Marinobacter aquaeolei).